A 279-amino-acid polypeptide reads, in one-letter code: NADPH-dependent 7-cyano-7-deazaguanine reductase (279 aa).

Position 86 to 88 (86 to 88 (IES)) interacts with substrate. 88–89 (SK) contacts NADPH. Residue Cys186 is the Thioimide intermediate of the active site. The active-site Proton donor is the Asp193. A substrate-binding site is contributed by 225–226 (HE). 254–255 (RG) is an NADPH binding site.

It belongs to the GTP cyclohydrolase I family. QueF type 2 subfamily. As to quaternary structure, homodimer.

It is found in the cytoplasm. The enzyme catalyses 7-aminomethyl-7-carbaguanine + 2 NADP(+) = 7-cyano-7-deazaguanine + 2 NADPH + 3 H(+). It functions in the pathway tRNA modification; tRNA-queuosine biosynthesis. Functionally, catalyzes the NADPH-dependent reduction of 7-cyano-7-deazaguanine (preQ0) to 7-aminomethyl-7-deazaguanine (preQ1). The protein is NADPH-dependent 7-cyano-7-deazaguanine reductase of Chromobacterium violaceum (strain ATCC 12472 / DSM 30191 / JCM 1249 / CCUG 213 / NBRC 12614 / NCIMB 9131 / NCTC 9757 / MK).